The chain runs to 404 residues: Cysteine desulfurase IscS (404 aa).

Residues 75-76 (AT), N155, Q183, and 203-205 (SGH) contribute to the pyridoxal 5'-phosphate site. K206 is subject to N6-(pyridoxal phosphate)lysine. Residue T243 coordinates pyridoxal 5'-phosphate. C328 serves as the catalytic Cysteine persulfide intermediate. [2Fe-2S] cluster is bound at residue C328.

Belongs to the class-V pyridoxal-phosphate-dependent aminotransferase family. NifS/IscS subfamily. In terms of assembly, homodimer. Forms a heterotetramer with IscU, interacts with other sulfur acceptors. Requires pyridoxal 5'-phosphate as cofactor.

Its subcellular location is the cytoplasm. It catalyses the reaction (sulfur carrier)-H + L-cysteine = (sulfur carrier)-SH + L-alanine. The protein operates within cofactor biosynthesis; iron-sulfur cluster biosynthesis. Functionally, master enzyme that delivers sulfur to a number of partners involved in Fe-S cluster assembly, tRNA modification or cofactor biosynthesis. Catalyzes the removal of elemental sulfur atoms from cysteine to produce alanine. Functions as a sulfur delivery protein for Fe-S cluster synthesis onto IscU, an Fe-S scaffold assembly protein, as well as other S acceptor proteins. In Serratia proteamaculans (strain 568), this protein is Cysteine desulfurase IscS.